The sequence spans 291 residues: ATP synthase gamma chain (291 aa).

Belongs to the ATPase gamma chain family. In terms of assembly, F-type ATPases have 2 components, CF(1) - the catalytic core - and CF(0) - the membrane proton channel. CF(1) has five subunits: alpha(3), beta(3), gamma(1), delta(1), epsilon(1). CF(0) has three main subunits: a, b and c.

The protein localises to the cell inner membrane. Functionally, produces ATP from ADP in the presence of a proton gradient across the membrane. The gamma chain is believed to be important in regulating ATPase activity and the flow of protons through the CF(0) complex. The chain is ATP synthase gamma chain from Pelodictyon phaeoclathratiforme (strain DSM 5477 / BU-1).